The primary structure comprises 86 residues: Acyl carrier protein (86 aa).

The Carrier domain maps to 7–85; that stretch reads SKVDNIEQKV…DVVNYIKEHK (79 aa). Residue Ser45 is modified to O-(pantetheine 4'-phosphoryl)serine.

It belongs to the acyl carrier protein (ACP) family. In terms of processing, 4'-phosphopantetheine is transferred from CoA to a specific serine of apo-ACP by AcpS. This modification is essential for activity because fatty acids are bound in thioester linkage to the sulfhydryl of the prosthetic group.

The protein localises to the cytoplasm. The protein operates within lipid metabolism; fatty acid biosynthesis. In terms of biological role, carrier of the growing fatty acid chain in fatty acid biosynthesis. The polypeptide is Acyl carrier protein (Rickettsia bellii (strain RML369-C)).